A 515-amino-acid polypeptide reads, in one-letter code: Maturase K (515 aa).

The protein belongs to the intron maturase 2 family. MatK subfamily.

It is found in the plastid. The protein localises to the chloroplast. In terms of biological role, usually encoded in the trnK tRNA gene intron. Probably assists in splicing its own and other chloroplast group II introns. This Pinus elliottii (Slash pine) protein is Maturase K.